The primary structure comprises 205 residues: Endoplasmic reticulum membrane protein complex subunit 10 (205 aa).

The first 17 residues, 1 to 17 (MLVRLLRVILLASMVFC), serve as a signal peptide directing secretion. Residues 18–172 (ADILQLSYSD…VKEVSWFQKN (155 aa)) lie on the Lumenal side of the membrane. The N-linked (GlcNAc...) asparagine glycan is linked to Asn47. A helical membrane pass occupies residues 173–190 (WKMLLLGLLIYNFVAGSA). Residues 191–205 (KKQQQGGAGADQKTE) are Cytoplasmic-facing.

Component of the ER membrane protein complex (EMC).

It localises to the endoplasmic reticulum membrane. Its function is as follows. Part of the endoplasmic reticulum membrane protein complex (EMC) that enables the energy-independent insertion into endoplasmic reticulum membranes of newly synthesized membrane proteins. Preferentially accommodates proteins with transmembrane domains that are weakly hydrophobic or contain destabilizing features such as charged and aromatic residues. Involved in the cotranslational insertion of multi-pass membrane proteins in which stop-transfer membrane-anchor sequences become ER membrane spanning helices. It is also required for the post-translational insertion of tail-anchored/TA proteins in endoplasmic reticulum membranes. By mediating the proper cotranslational insertion of N-terminal transmembrane domains in an N-exo topology, with translocated N-terminus in the lumen of the ER, controls the topology of multi-pass membrane proteins. In Saccharomyces cerevisiae (strain ATCC 204508 / S288c) (Baker's yeast), this protein is Endoplasmic reticulum membrane protein complex subunit 10.